The chain runs to 131 residues: Inner membrane protein YecN (131 aa).

Residues Met-1–Thr-107 lie on the Cytoplasmic side of the membrane. Residues Trp-108–Phe-128 traverse the membrane as a helical segment. Topologically, residues Ser-129 to Arg-131 are periplasmic.

It is found in the cell inner membrane. This Escherichia coli O6:H1 (strain CFT073 / ATCC 700928 / UPEC) protein is Inner membrane protein YecN (yecN).